Reading from the N-terminus, the 424-residue chain is Histidine--tRNA ligase (424 aa).

The protein belongs to the class-II aminoacyl-tRNA synthetase family. Homodimer.

The protein resides in the cytoplasm. The enzyme catalyses tRNA(His) + L-histidine + ATP = L-histidyl-tRNA(His) + AMP + diphosphate + H(+). In Bacillus velezensis (strain DSM 23117 / BGSC 10A6 / LMG 26770 / FZB42) (Bacillus amyloliquefaciens subsp. plantarum), this protein is Histidine--tRNA ligase.